Consider the following 237-residue polypeptide: Urease accessory protein UreF (237 aa).

The protein belongs to the UreF family. As to quaternary structure, ureD, UreF and UreG form a complex that acts as a GTP-hydrolysis-dependent molecular chaperone, activating the urease apoprotein by helping to assemble the nickel containing metallocenter of UreC. The UreE protein probably delivers the nickel.

The protein resides in the cytoplasm. In terms of biological role, required for maturation of urease via the functional incorporation of the urease nickel metallocenter. This chain is Urease accessory protein UreF, found in Methylibium petroleiphilum (strain ATCC BAA-1232 / LMG 22953 / PM1).